We begin with the raw amino-acid sequence, 225 residues long: 2-C-methyl-D-erythritol 4-phosphate cytidylyltransferase (225 aa).

Belongs to the IspD/TarI cytidylyltransferase family. IspD subfamily.

The catalysed reaction is 2-C-methyl-D-erythritol 4-phosphate + CTP + H(+) = 4-CDP-2-C-methyl-D-erythritol + diphosphate. The protein operates within isoprenoid biosynthesis; isopentenyl diphosphate biosynthesis via DXP pathway; isopentenyl diphosphate from 1-deoxy-D-xylulose 5-phosphate: step 2/6. Its function is as follows. Catalyzes the formation of 4-diphosphocytidyl-2-C-methyl-D-erythritol from CTP and 2-C-methyl-D-erythritol 4-phosphate (MEP). This is 2-C-methyl-D-erythritol 4-phosphate cytidylyltransferase from Cereibacter sphaeroides (strain ATCC 17023 / DSM 158 / JCM 6121 / CCUG 31486 / LMG 2827 / NBRC 12203 / NCIMB 8253 / ATH 2.4.1.) (Rhodobacter sphaeroides).